Reading from the N-terminus, the 84-residue chain is UPF0153 protein YeiW (84 aa).

It belongs to the UPF0153 family.

This is UPF0153 protein YeiW (yeiW) from Escherichia coli (strain K12).